Consider the following 663-residue polypeptide: MRGCLQSVRLLTTALGQSPRRPLPFAFRLPPNASRLFSTCASRAAATAKKPPSELEERILAIPIERYRNFCIVAHVDHGKSTLSDRLLELTGTIEPGSNKQVLDKLDVERERGITVKAQTCTMLYNHKGDDYLLHLVDTPGHVDFRAEVSRSYASCGGALLLVDASQGVQAQTVANFYLAFAQGLELVPVINKVDLPSADPKRALEQMETTFELDTDKAVLVSAKTGLNVQQLLPTIVEQIPAPIGDHTKPLRVLLVDSWYDTYKGVILLIRVFDGSVKAGDQLVSFATQKKYIVGEVGIMYPNQTAQSVLRAGQVGYVYFNPGMKKSQEAKIGDTLTKVGSEKLVKPLPGFEEPKAMVFVAAYPVHADDFPHLEDSINQLLLNDRSITVKKESSEALGAGFRLGFLGTLHCSVFQDRLQQEHGANIIITPPSVPCKVLWNSGEETVITSPVDFPDGDSNRMKVKEFQEPYVLTTLTFPHEYLGKVIELCEGNRGEQVSLEFFTASQVILKYQLPLAQLVDDFFGKLKGLTKGYASLDYEESGWRKSNVVKLKLLVNKMPVDAVSRVVHISQVPRLGKQWVTKFKEHVDRQMFEIVIQAAIGNKIVARETIKPYRKDVLAKLHASDVTRRKKLLERQKEGRKKLQAVGNVVIEHKAFQAFLSK.

The transit peptide at 1-37 (MRGCLQSVRLLTTALGQSPRRPLPFAFRLPPNASRLF) directs the protein to the mitochondrion. The tr-type G domain occupies 65-245 (ERYRNFCIVA…TIVEQIPAPI (181 aa)). Residues 74 to 81 (AHVDHGKS), 138 to 142 (DTPGH), and 192 to 195 (NKVD) contribute to the GTP site.

It belongs to the TRAFAC class translation factor GTPase superfamily. Classic translation factor GTPase family. LepA subfamily.

Its subcellular location is the mitochondrion inner membrane. It catalyses the reaction GTP + H2O = GDP + phosphate + H(+). In terms of biological role, promotes mitochondrial protein synthesis. May act as a fidelity factor of the translation reaction, by catalyzing a one-codon backward translocation of tRNAs on improperly translocated ribosomes. Binds to mitochondrial ribosomes in a GTP-dependent manner. The sequence is that of Translation factor GUF1, mitochondrial from Uncinocarpus reesii (strain UAMH 1704).